A 394-amino-acid chain; its full sequence is Actin-related protein 2 (394 aa).

ATP-binding positions include 160-162 (GDG), 214-218 (RMIKE), and 305-310 (GGSTMY).

This sequence belongs to the actin family. ARP2 subfamily. Component of the Arp2/3 complex composed of ACTR2/ARP2, ACTR3/ARP3, ARPC1B/p41-ARC, ARPC2/p34-ARC, ARPC3/p21-ARC, ARPC4/p20-ARC and ARPC5/p16-ARC.

The protein localises to the cytoplasm. The protein resides in the cytoskeleton. It localises to the cell projection. It is found in the nucleus. ATP-binding component of the Arp2/3 complex, a multiprotein complex that mediates actin polymerization upon stimulation by nucleation-promoting factor (NPF). The Arp2/3 complex mediates the formation of branched actin networks in the cytoplasm, providing the force for cell motility. Seems to contact the pointed end of the daughter actin filament. In addition to its role in the cytoplasmic cytoskeleton, the Arp2/3 complex also promotes actin polymerization in the nucleus, thereby regulating gene transcription and repair of damaged DNA. The Arp2/3 complex promotes homologous recombination (HR) repair in response to DNA damage by promoting nuclear actin polymerization, leading to drive motility of double-strand breaks (DSBs). This is Actin-related protein 2 (ACTR2) from Gallus gallus (Chicken).